Here is a 120-residue protein sequence, read N- to C-terminus: uncharacterized protein (120 aa).

Residues 1–22 form the signal peptide; the sequence is MSTSGMLFIFATFCPCFLSCCA. Residues 23–59 are Extracellular-facing; sequence FMSHWKLKDFSFRFLRMCGERSLVVCYPLKLLKQIRS. The chain crosses the membrane as a helical span at residues 60 to 80; the sequence is LFSIAIGHLSLMLIEGSANLL. The Cytoplasmic segment spans residues 81–120; it reads SLEEISRTLLRILDFVGNKNMRTYLEVPLCRWHISQARPN.

The protein localises to the membrane. This is an uncharacterized protein from Schizosaccharomyces pombe (strain 972 / ATCC 24843) (Fission yeast).